The sequence spans 812 residues: ATP-dependent DNA helicase PIF3 (812 aa).

Residue 247–254 (GSAGTGKT) participates in ATP binding. A DNA-binding region spans residues 741-761 (HLVYVACSRVRSMDQLIVRNV).

The protein belongs to the helicase family. PIF1 subfamily. As to quaternary structure, monomer. Mg(2+) serves as cofactor.

The protein resides in the cytoplasm. The enzyme catalyses Couples ATP hydrolysis with the unwinding of duplex DNA at the replication fork by translocating in the 5'-3' direction. This creates two antiparallel DNA single strands (ssDNA). The leading ssDNA polymer is the template for DNA polymerase III holoenzyme which synthesizes a continuous strand.. It catalyses the reaction ATP + H2O = ADP + phosphate + H(+). DNA-dependent ATPase and 5'-3' DNA helicase required for the maintenance of genome stability. The polypeptide is ATP-dependent DNA helicase PIF3 (Trypanosoma brucei brucei (strain 927/4 GUTat10.1)).